A 95-amino-acid chain; its full sequence is Translation initiation factor 1A (95 aa).

The region spanning 7–81 (GRKNLRMPED…DKADVTWRYE (75 aa)) is the S1-like domain.

The protein belongs to the eIF-1A family.

Functionally, seems to be required for maximal rate of protein biosynthesis. Enhances ribosome dissociation into subunits and stabilizes the binding of the initiator Met-tRNA(I) to 40 S ribosomal subunits. The protein is Translation initiation factor 1A (eIF1A) of Halobacterium salinarum (strain ATCC 29341 / DSM 671 / R1).